The following is a 196-amino-acid chain: Ribosome maturation factor RimP (196 aa).

Positions 164–196 are disordered; it reads LAPQKPNKPGPKKPGHEKKKPSNESAAGKPRAE. Residues 173-182 are compositionally biased toward basic residues; sequence GPKKPGHEKK.

The protein belongs to the RimP family.

The protein localises to the cytoplasm. In terms of biological role, required for maturation of 30S ribosomal subunits. This Xanthomonas axonopodis pv. citri (strain 306) protein is Ribosome maturation factor RimP.